The primary structure comprises 553 residues: Methyl-coenzyme M reductase I subunit alpha (553 aa).

Position 150 (Gln-150) interacts with coenzyme F430. Coenzyme B-binding positions include Arg-228, 259 to 260 (KH), and Arg-273. Arg-274 is modified (5-methylarginine). Residues Tyr-335 and Tyr-447 each contribute to the coenzyme M site.

The protein belongs to the methyl-coenzyme M reductase alpha subunit family. In terms of assembly, MCR is a hexamer of two alpha, two beta, and two gamma chains, forming a dimer of heterotrimers. Requires coenzyme F430 as cofactor. Is methylated on C5 of Arg-274 by the methyltransferase MJ0841. This post-translational methylation, despite being not essential in vivo, plays a role for the stability and structural integrity of MCR.

It localises to the cytoplasm. It catalyses the reaction coenzyme B + methyl-coenzyme M = methane + coenzyme M-coenzyme B heterodisulfide. It functions in the pathway one-carbon metabolism; methyl-coenzyme M reduction; methane from methyl-coenzyme M: step 1/1. Its function is as follows. Component of the methyl-coenzyme M reductase (MCR) I that catalyzes the reductive cleavage of methyl-coenzyme M (CoM-S-CH3 or 2-(methylthio)ethanesulfonate) using coenzyme B (CoB or 7-mercaptoheptanoylthreonine phosphate) as reductant which results in the production of methane and the mixed heterodisulfide of CoB and CoM (CoM-S-S-CoB). This is the final step in methanogenesis. The chain is Methyl-coenzyme M reductase I subunit alpha (mcrA) from Methanocaldococcus jannaschii (strain ATCC 43067 / DSM 2661 / JAL-1 / JCM 10045 / NBRC 100440) (Methanococcus jannaschii).